The chain runs to 239 residues: Adapter protein MecA (239 aa).

Residues 118 to 128 (EQRTKEKEAQG) show a composition bias toward basic and acidic residues. The interval 118 to 137 (EQRTKEKEAQGSKRQKSSAR) is disordered.

The protein belongs to the MecA family. Homodimer.

Its function is as follows. Enables the recognition and targeting of unfolded and aggregated proteins to the ClpC protease or to other proteins involved in proteolysis. This is Adapter protein MecA from Staphylococcus aureus (strain COL).